The primary structure comprises 246 residues: Uridylate kinase (246 aa).

K11–G14 provides a ligand contact to ATP. G53 is a binding site for UMP. ATP is bound by residues G54 and R58. Residues D73 and T134 to T141 contribute to the UMP site. ATP is bound by residues T161, Y167, and D170.

It belongs to the UMP kinase family. Homohexamer.

The protein resides in the cytoplasm. The enzyme catalyses UMP + ATP = UDP + ADP. Its pathway is pyrimidine metabolism; CTP biosynthesis via de novo pathway; UDP from UMP (UMPK route): step 1/1. With respect to regulation, inhibited by UTP. Catalyzes the reversible phosphorylation of UMP to UDP. This Leptospira borgpetersenii serovar Hardjo-bovis (strain JB197) protein is Uridylate kinase.